A 425-amino-acid polypeptide reads, in one-letter code: UPF0597 protein UNCMA_16400 (425 aa).

This sequence belongs to the UPF0597 family.

This is UPF0597 protein UNCMA_16400 from Methanocella arvoryzae (strain DSM 22066 / NBRC 105507 / MRE50).